The sequence spans 318 residues: Cell growth regulator with EF hand domain protein 1 (318 aa).

Residues Met-1–Ala-19 form the signal peptide. EF-hand domains are found at residues Ser-69–Pro-104 and Pro-114–His-149. Ca(2+) is bound by residues Asp-82, Asp-84, Ser-86, Gln-88, Glu-93, Asp-127, Asn-129, Asp-131, and Glu-138. The interval Leu-177–Ile-318 is disordered. Composition is skewed to basic and acidic residues over residues Gly-186–Leu-202 and Gly-223–Gly-233. 3 repeat units span residues Pro-219–Ala-235, Pro-236–Ala-252, and Pro-253–Ala-269. The segment at Pro-219–Gly-286 is 4 X 17 AA approximate tandem repeats of P-G-P-R-G-E-A-G-G-Q-A-E-A-[KR]-G-D-A. Low complexity predominate over residues Ala-235 to Pro-272. The 4; approximate repeat unit spans residues Pro-270–Gly-286. The segment covering Glu-281–Pro-293 has biased composition (basic and acidic residues).

Post-translationally, probably digested extracellularly by an unknown serine protease generating extremely hydrophobic bioactive peptides.

Its subcellular location is the secreted. Its function is as follows. Mediates cell-cell adhesion in a calcium-dependent manner. Able to inhibit growth in several cell lines. This is Cell growth regulator with EF hand domain protein 1 from Homo sapiens (Human).